Consider the following 602-residue polypeptide: Elongation factor 4 (602 aa).

A tr-type G domain is found at 7-189 (SKIRNFCIIA…AIVRRVPPPQ (183 aa)). Residues 19–24 (DHGKST) and 136–139 (NKVD) contribute to the GTP site.

This sequence belongs to the TRAFAC class translation factor GTPase superfamily. Classic translation factor GTPase family. LepA subfamily.

It localises to the cell inner membrane. It carries out the reaction GTP + H2O = GDP + phosphate + H(+). In terms of biological role, required for accurate and efficient protein synthesis under certain stress conditions. May act as a fidelity factor of the translation reaction, by catalyzing a one-codon backward translocation of tRNAs on improperly translocated ribosomes. Back-translocation proceeds from a post-translocation (POST) complex to a pre-translocation (PRE) complex, thus giving elongation factor G a second chance to translocate the tRNAs correctly. Binds to ribosomes in a GTP-dependent manner. This Prochlorococcus marinus (strain MIT 9215) protein is Elongation factor 4.